We begin with the raw amino-acid sequence, 250 residues long: Low affinity immunoglobulin gamma Fc region receptor III-A (250 aa).

Positions 1–20 are cleaved as a signal peptide; the sequence is MWRLLSPTALLLLVSAGTRA. The Extracellular segment spans residues 21–207; that stretch reads ADLSKAMVVL…TSTFLPHWYQ (187 aa). 2 consecutive Ig-like C2-type domains span residues 32–105 and 120–189; these read PEWN…LEVH and EGDT…VNIT. 2 cysteine pairs are disulfide-bonded: C47–C89 and C128–C172. N-linked (GlcNAc...) asparagine glycosylation is found at N63, N133, N180, and N187. Residues 208–228 traverse the membrane as a helical segment; that stretch reads IAFFLVTALLFVVDTGLHVAV. Over 229 to 250 the chain is Cytoplasmic; the sequence is QRDLQSSVKEWKDGKVTWSHGP.

In terms of assembly, forms a heterooligomeric complex with ITAM-containing signaling subunits FCER1G. Interacts (via transmembrane domain) with signaling subunits; this interaction is a prerequisite for receptor complex expression on the cell surface and intracellular signal transduction. Binds the Fc region of antigen-complexed IgG.

The protein resides in the cell membrane. Functionally, receptor for the invariable Fc fragment of immunoglobulin gamma (IgG). Optimally activated upon binding of clustered antigen-IgG complexes displayed on cell surfaces, triggers lysis of antibody-coated cells, a process known as antibody-dependent cellular cytotoxicity (ADCC). Does not bind free monomeric IgG, thus avoiding inappropriate effector cell activation in the absence of antigenic trigger. Mediates IgG effector functions on natural killer (NK) cells. Binds antigen-IgG complexes generated upon infection and triggers NK cell-dependent cytokine production and degranulation to limit viral load and propagation. Fc-binding subunit that associates with FCER1G adapter to form functional signaling complexes. Following the engagement of antigen-IgG complexes, triggers phosphorylation of immunoreceptor tyrosine-based activation motif (ITAM)-containing adapter with subsequent activation of phosphatidylinositol 3-kinase signaling and sustained elevation of intracellular calcium that ultimately drive NK cell activation. Mediates enhanced ADCC in response to afucosylated IgGs. This chain is Low affinity immunoglobulin gamma Fc region receptor III-A, found in Felis catus (Cat).